Here is a 1148-residue protein sequence, read N- to C-terminus: Minor outer capsid protein P2 (1148 aa).

Residues 930-1148 enclose the PPPDE domain; the sequence is QDGTANIFQK…QYIQSIYDEL (219 aa). Active-site residues include histidine 954 and cysteine 1111.

It belongs to the phytoreovirus minor outer capsid protein P2 family.

It is found in the virion. The protein resides in the host cytoplasm. Functionally, minor capsid protein present in the outer capsid, which is required for adsorption of the virus onto host insect cells. In Nephotettix cincticeps (Green rice leafhopper), this protein is Minor outer capsid protein P2.